A 189-amino-acid chain; its full sequence is Copper transport protein CTR2 (189 aa).

Residues 1 to 81 lie on the Cytoplasmic side of the membrane; the sequence is MDDKKTWSTV…VVFEWWHIKT (81 aa). Residues 82 to 102 form a helical membrane-spanning segment; sequence LPGLILSCLAIFGLAYLYEYL. At 103–142 the chain is on the vacuolar side; the sequence is KYCVHKRQLSQRVLLPNRSLTKINQADKVSNSILYGLQVG. The helical transmembrane segment at 143-163 threads the bilayer; the sequence is FSFMLMLVFMTYNGWLMLAVV. The Cytoplasmic segment spans residues 164–189; it reads CGAIWGNYSWCTSYSPEIDDSSLACH.

Belongs to the copper transporter (Ctr) (TC 1.A.56) family. SLC31A subfamily. In terms of assembly, homomultimer.

The protein localises to the vacuole membrane. In terms of biological role, provides bioavailable copper via mobilization of vacuolar copper stores and export to the cytoplasm. The polypeptide is Copper transport protein CTR2 (CTR2) (Saccharomyces cerevisiae (strain ATCC 204508 / S288c) (Baker's yeast)).